Consider the following 485-residue polypeptide: Protein nucleotidyltransferase YdiU (485 aa).

Residues glycine 100, glycine 102, arginine 103, lysine 123, aspartate 135, glycine 136, arginine 189, and arginine 196 each contribute to the ATP site. Aspartate 265 acts as the Proton acceptor in catalysis. 2 residues coordinate Mg(2+): asparagine 266 and aspartate 275. Position 275 (aspartate 275) interacts with ATP.

It belongs to the SELO family. The cofactor is Mg(2+). Requires Mn(2+) as cofactor.

The enzyme catalyses L-seryl-[protein] + ATP = 3-O-(5'-adenylyl)-L-seryl-[protein] + diphosphate. It carries out the reaction L-threonyl-[protein] + ATP = 3-O-(5'-adenylyl)-L-threonyl-[protein] + diphosphate. It catalyses the reaction L-tyrosyl-[protein] + ATP = O-(5'-adenylyl)-L-tyrosyl-[protein] + diphosphate. The catalysed reaction is L-histidyl-[protein] + UTP = N(tele)-(5'-uridylyl)-L-histidyl-[protein] + diphosphate. The enzyme catalyses L-seryl-[protein] + UTP = O-(5'-uridylyl)-L-seryl-[protein] + diphosphate. It carries out the reaction L-tyrosyl-[protein] + UTP = O-(5'-uridylyl)-L-tyrosyl-[protein] + diphosphate. Nucleotidyltransferase involved in the post-translational modification of proteins. It can catalyze the addition of adenosine monophosphate (AMP) or uridine monophosphate (UMP) to a protein, resulting in modifications known as AMPylation and UMPylation. The chain is Protein nucleotidyltransferase YdiU from Trichormus variabilis (strain ATCC 29413 / PCC 7937) (Anabaena variabilis).